We begin with the raw amino-acid sequence, 353 residues long: Photosystem II protein D1 (353 aa).

An N-acetylthreonine modification is found at Thr2. Thr2 carries the phosphothreonine modification. Helical transmembrane passes span Tyr29–Ser46, His118–Leu133, and Trp142–Ala156. His118 serves as a coordination point for chlorophyll a. Tyr126 is a binding site for pheophytin a. Residues Asp170 and Glu189 each contribute to the [CaMn4O5] cluster site. A helical membrane pass occupies residues Phe197–Leu218. His198 contacts chlorophyll a. A quinone is bound by residues His215 and Ser264–Phe265. His215 contacts Fe cation. His272 lines the Fe cation pocket. The chain crosses the membrane as a helical span at residues Phe274–Leu288. [CaMn4O5] cluster contacts are provided by His332, Glu333, Asp342, and Ala344. Positions Ala345–Gly353 are excised as a propeptide.

Belongs to the reaction center PufL/M/PsbA/D family. PSII is composed of 1 copy each of membrane proteins PsbA, PsbB, PsbC, PsbD, PsbE, PsbF, PsbH, PsbI, PsbJ, PsbK, PsbL, PsbM, PsbT, PsbX, PsbY, PsbZ, Psb30/Ycf12, at least 3 peripheral proteins of the oxygen-evolving complex and a large number of cofactors. It forms dimeric complexes. Requires The D1/D2 heterodimer binds P680, chlorophylls that are the primary electron donor of PSII, and subsequent electron acceptors. It shares a non-heme iron and each subunit binds pheophytin, quinone, additional chlorophylls, carotenoids and lipids. D1 provides most of the ligands for the Mn4-Ca-O5 cluster of the oxygen-evolving complex (OEC). There is also a Cl(-1) ion associated with D1 and D2, which is required for oxygen evolution. The PSII complex binds additional chlorophylls, carotenoids and specific lipids. as cofactor. Tyr-161 forms a radical intermediate that is referred to as redox-active TyrZ, YZ or Y-Z. In terms of processing, C-terminally processed by CTPA; processing is essential to allow assembly of the oxygen-evolving complex and thus photosynthetic growth.

The protein resides in the plastid. The protein localises to the chloroplast thylakoid membrane. The catalysed reaction is 2 a plastoquinone + 4 hnu + 2 H2O = 2 a plastoquinol + O2. Its function is as follows. Photosystem II (PSII) is a light-driven water:plastoquinone oxidoreductase that uses light energy to abstract electrons from H(2)O, generating O(2) and a proton gradient subsequently used for ATP formation. It consists of a core antenna complex that captures photons, and an electron transfer chain that converts photonic excitation into a charge separation. The D1/D2 (PsbA/PsbD) reaction center heterodimer binds P680, the primary electron donor of PSII as well as several subsequent electron acceptors. The protein is Photosystem II protein D1 of Lolium perenne (Perennial ryegrass).